The chain runs to 154 residues: Protein X (154 aa).

The interval proline 68–phenylalanine 117 is mitochondrial targeting sequence.

This sequence belongs to the orthohepadnavirus protein X family. In terms of assembly, may form homodimer. May interact with host CEBPA, CFLAR, CREB1, DDB1, E4F1, HBXIP, HSPD1/HSP60, NFKBIA, POLR2E and SMAD4. Interacts with host SMC5-SMC6 complex and induces its degradation. Interacts with host TRPC4AP; leading to prevent ubiquitination of TRPC4AP. Interacts with host PLSCR1; this interaction promotes ubiquitination and degradation of HBx and impairs HBx-mediated cell proliferation. A fraction may be phosphorylated in insect cells and HepG2 cells, a human hepatoblastoma cell line. Phosphorylated in vitro by host protein kinase C or mitogen-activated protein kinase. N-acetylated in insect cells.

Its subcellular location is the host cytoplasm. It localises to the host nucleus. The protein resides in the host mitochondrion. Its function is as follows. Multifunctional protein that plays a role in silencing host antiviral defenses and promoting viral transcription. Does not seem to be essential for HBV infection. May be directly involved in development of cirrhosis and liver cancer (hepatocellular carcinoma). Most of cytosolic activities involve modulation of cytosolic calcium. The effect on apoptosis is controversial depending on the cell types in which the studies have been conducted. May induce apoptosis by localizing in mitochondria and causing loss of mitochondrial membrane potential. May also modulate apoptosis by binding host CFLAR, a key regulator of the death-inducing signaling complex (DISC). Promotes viral transcription by using the host E3 ubiquitin ligase DDB1 to target the SMC5-SMC6 complex to proteasomal degradation. This host complex would otherwise bind to viral episomal DNA, and prevents its transcription. Moderately stimulates transcription of many different viral and cellular transcription elements. Promoters and enhancers stimulated by HBx contain DNA binding sites for NF-kappa-B, AP-1, AP-2, c-EBP, ATF/CREB, or the calcium-activated factor NF-AT. This is Protein X from Homo sapiens (Human).